Consider the following 242-residue polypeptide: Cysteine-rich venom protein VAR11 (242 aa).

An N-terminal signal peptide occupies residues 1 to 19 (MILLKLYLTLAAILCQSRG). An SCP domain is found at 41–169 (NKHNDLRRTV…SLKYFQVCQY (129 aa)). Disulfide bonds link C77/C156, C95/C170, C151/C167, C189/C196, C192/C201, C205/C237, C214/C231, and C223/C235. The region spanning 205–237 (CAYNDDYTSCPDLTKQVGCNHPVTANCKASCQC) is the ShKT domain.

Belongs to the CRISP family. As to expression, expressed by the venom gland.

The protein resides in the secreted. Blocks ryanodine receptors, and potassium channels. The sequence is that of Cysteine-rich venom protein VAR11 from Varanus varius (Lace monitor lizard).